A 1596-amino-acid chain; its full sequence is SET-binding protein (1596 aa).

Positions 1–12 (MESRETLSSSRQ) are enriched in polar residues. Disordered regions lie at residues 1 to 83 (MESR…WVAG), 134 to 426 (KQSG…SIKA), and 475 to 518 (SPSV…SRKL). The segment covering 64–81 (GSGRDVDSNSNADSEKWV) has biased composition (basic and acidic residues). Positions 164–175 (LTASDLAASDLK) are enriched in low complexity. Polar residues-rich tracts occupy residues 213–236 (KSSS…QNCF) and 270–282 (AGNT…NNNK). Residues 290 to 306 (APSPSSHSSPAPPSSSA) are compositionally biased toward low complexity. Over residues 363–372 (DNTEGKREGY) the composition is skewed to basic and acidic residues. A compositionally biased stretch (polar residues) spans 375–395 (DSAQEASPARQNVSSASNPEN). Residues 584-596 (KKKRGRPKKQPLL) constitute a DNA-binding region (a.T hook 1). Disordered regions lie at residues 604-624 (GTST…KKRK), 722-763 (YIGK…AVPS), and 777-796 (HPLS…ASTE). Over residues 779 to 796 (LSTQLGGSNGNLSPASTE) the composition is skewed to polar residues. Lys-817 bears the N6-acetyllysine mark. Polar residues predominate over residues 854–880 (SPVSESHSEETIPSDSGIGTDNNSTSD). The disordered stretch occupies residues 854 to 889 (SPVSESHSEETIPSDSGIGTDNNSTSDQAEKSSESR). Residues 1016–1028 (KKKRGRPAKTNDT) constitute a DNA-binding region (a.T hook 2). Disordered regions lie at residues 1134 to 1164 (PPKV…DRIL), 1202 to 1225 (EKNK…SKNN), 1245 to 1300 (AKEK…GSKR), 1325 to 1344 (SSYD…KVDQ), 1440 to 1473 (QRQS…DQMP), and 1518 to 1596 (EAPP…EVLP). Positions 1146–1159 (RLHKRKHKHKHKHK) are enriched in basic residues. Basic residues predominate over residues 1450–1459 (VKKRRGRPRK). Residues 1451-1463 (KKRRGRPRKQPTQ) constitute a DNA-binding region (a.T hook 3). Tandem repeats lie at residues 1520–1527 (PPLPPPPP), 1528–1535 (PPLPPPPP), and 1536–1543 (PPLPPPPP). Positions 1520–1543 (PPLPPPPPPPLPPPPPPPLPPPPP) are 3 X 8 AA tandem repeats of P-P-L-P-P-P-P-P. 2 stretches are compositionally biased toward pro residues: residues 1520–1546 (PPLP…PLPK) and 1560–1572 (PAQP…PQQP).

As to quaternary structure, interacts with SET. As to expression, expressed in numerous tissues. Expressed at low levels in myeloid and monocytic cells as well as in CD34+ cells; expression levels are higher in myeloid malignancies.

It is found in the nucleus. The polypeptide is SET-binding protein (SETBP1) (Homo sapiens (Human)).